Here is a 164-residue protein sequence, read N- to C-terminus: Small ribosomal subunit protein uS3m (164 aa).

A mitochondrion-targeting transit peptide spans 1–23 (MLRSIQHVEALSSRQISTTSMLL).

The protein belongs to the universal ribosomal protein uS3 family. As to quaternary structure, component of the mitochondrial ribosome small subunit (28S) which comprises a 12S rRNA and about 30 distinct proteins.

The protein resides in the mitochondrion. The chain is Small ribosomal subunit protein uS3m (mrps-24) from Caenorhabditis elegans.